Reading from the N-terminus, the 311-residue chain is Cell division control protein 2 homolog 3 (311 aa).

The Protein kinase domain maps to 23-306 (YNRMDILGEG…AKAALQHPWF (284 aa)). ATP contacts are provided by residues 29 to 37 (LGEGTYGVV) and Lys-52. Thr-33 is modified (phosphothreonine). Tyr-34 is modified (phosphotyrosine). Asp-145 (proton acceptor) is an active-site residue.

It belongs to the protein kinase superfamily. CMGC Ser/Thr protein kinase family. CDC2/CDKX subfamily. Forms a stable but non-covalent complex with a regulatory subunit and with a cyclin.

It catalyses the reaction L-seryl-[protein] + ATP = O-phospho-L-seryl-[protein] + ADP + H(+). It carries out the reaction L-threonyl-[protein] + ATP = O-phospho-L-threonyl-[protein] + ADP + H(+). Phosphorylation at Thr-33 or Tyr-34 inactivates the enzyme. Probably involved in the control of the cell cycle. The protein is Cell division control protein 2 homolog 3 (CRK3) of Trypanosoma brucei brucei.